The sequence spans 1038 residues: uncharacterized protein (1038 aa).

Positions Met1 to Gly14 are enriched in polar residues. The segment at Met1–Ser100 is disordered. Basic and acidic residues predominate over residues Asn58–Ile71. A compositionally biased stretch (acidic residues) spans Ile72–Asn83. A phosphoserine mark is found at Ser112, Ser113, and Ser114. 5 disordered regions span residues Gly144–Arg201, Glu360–Ala381, Ser422–Leu441, Gln454–Leu526, and Thr556–Thr575. Positions Ser156–Gln179 are enriched in low complexity. Residues Asp180–Val198 show a composition bias toward basic and acidic residues. 2 stretches are compositionally biased toward basic and acidic residues: residues His426 to Leu441 and Asp489 to Pro505. Phosphoserine is present on Ser436. The segment covering Ser506–Pro522 has biased composition (polar residues). Residues Ser618 and Ser856 each carry the phosphoserine modification. 3 disordered regions span residues Arg803 to Asp864, Gly940 to Arg974, and Lys1005 to Lys1024. The segment covering Thr826–Ser859 has biased composition (low complexity). Positions Val955–Arg974 are enriched in polar residues. Low complexity predominate over residues Glu1009–Ile1020.

It localises to the cytoplasm. This is an uncharacterized protein from Schizosaccharomyces pombe (strain 972 / ATCC 24843) (Fission yeast).